The sequence spans 384 residues: MAP kinase-activated protein kinase 3 (384 aa).

N-acetylmethionine is present on Met-1. The segment at 1-33 (MDGETAGEKGSLVPQPGALGAPALGGAPAPGVR) is disordered. Over residues 14–31 (PQPGALGAPALGGAPAPG) the composition is skewed to low complexity. A Protein kinase domain is found at 46–306 (QLSKQVLGLG…IMQFMNHPWI (261 aa)). ATP-binding positions include 52–60 (LGLGVNGKV) and Lys-75. Residue Asp-168 is the Proton acceptor of the active site. At Thr-203 the chain carries Phosphothreonine; by MAPK14. Phosphoserine; by MAPK14 is present on Ser-253. Ser-309 carries the phosphoserine; by autocatalysis modification. The autoinhibitory helix stretch occupies residues 309 to 345 (SMEVPQTPLHTARVLEEDKDHWDDVKEEMTSALATMR). A Phosphothreonine; by MAPK14 modification is found at Thr-315. Positions 337–346 (MTSALATMRV) match the Nuclear export signal (NES) motif. The tract at residues 347–371 (DYDQVKIKDLKTSNNRLLNKRRKKQ) is p38 MAPK-binding site. 2 consecutive short sequence motifs (bipartite nuclear localization signal) follow at residues 352 to 355 (KIKD) and 366 to 370 (KRRKK). The segment at 359–384 (SNNRLLNKRRKKQGGSSSASPGCNNQ) is disordered. Residues 372–384 (GGSSSASPGCNNQ) show a composition bias toward polar residues.

The protein belongs to the protein kinase superfamily. CAMK Ser/Thr protein kinase family. As to quaternary structure, heterodimer with p38-alpha/MAPK14. The heterodimer with p38-alpha/MAPK14 forms a stable complex: molecules are positioned 'face to face' so that the ATP-binding sites of both kinases are at the heterodimer interface. Interacts with TCF3 and with polycomb proteins, such as PCH2 and BMI1/PCGF4. Post-translationally, phosphorylated and activated by MAPK1/ERK2 and MAPK3/ERK1. Phosphorylated and activated by MAP kinase p38-alpha/MAPK14 at Thr-203, Ser-253 and Thr-315.

It localises to the nucleus. It is found in the cytoplasm. The catalysed reaction is L-seryl-[protein] + ATP = O-phospho-L-seryl-[protein] + ADP + H(+). It carries out the reaction L-threonyl-[protein] + ATP = O-phospho-L-threonyl-[protein] + ADP + H(+). Activated following phosphorylation by p38-alpha/MAPK14 following various stresses. Inhibited by ligand 5B (2'-[2-(1,3-benzodioxol-5-yl)pyrimidin-4-yl]-5',6'-dihydrospiro[piperidine-4,7'-pyrrolo[3,2-c]pyridin]- 4'(1'h)-one) and ligand P4O (2-[2-(2-fluorophenyl)pyridin-4-yl]-1,5,6,7-tetrahydro- 4h-pyrrolo[3,2-c]pyridin-4-one), 2 ATP-competitive inhibitors. In terms of biological role, stress-activated serine/threonine-protein kinase involved in cytokines production, endocytosis, cell migration, chromatin remodeling and transcriptional regulation. Following stress, it is phosphorylated and activated by MAP kinase p38-alpha/MAPK14, leading to phosphorylation of substrates. Phosphorylates serine in the peptide sequence, Hyd-X-R-X(2)-S, where Hyd is a large hydrophobic residue. MAPKAPK2 and MAPKAPK3, share the same function and substrate specificity, but MAPKAPK3 kinase activity and level in protein expression are lower compared to MAPKAPK2. Phosphorylates HSP27/HSPB1, KRT18, KRT20, RCSD1, RPS6KA3, TAB3 and TTP/ZFP36. Mediates phosphorylation of HSP27/HSPB1 in response to stress, leading to dissociate HSP27/HSPB1 from large small heat-shock protein (sHsps) oligomers and impair their chaperone activities and ability to protect against oxidative stress effectively. Involved in inflammatory response by regulating tumor necrosis factor (TNF) and IL6 production post-transcriptionally: acts by phosphorylating AU-rich elements (AREs)-binding proteins, such as TTP/ZFP36, leading to regulate the stability and translation of TNF and IL6 mRNAs. Phosphorylation of TTP/ZFP36, a major post-transcriptional regulator of TNF, promotes its binding to 14-3-3 proteins and reduces its ARE mRNA affinity leading to inhibition of dependent degradation of ARE-containing transcript. Involved in toll-like receptor signaling pathway (TLR) in dendritic cells: required for acute TLR-induced macropinocytosis by phosphorylating and activating RPS6KA3. Also acts as a modulator of Polycomb-mediated repression. The chain is MAP kinase-activated protein kinase 3 (Mapkapk3) from Rattus norvegicus (Rat).